We begin with the raw amino-acid sequence, 145 residues long: Large ribosomal subunit protein uL13 (145 aa).

Belongs to the universal ribosomal protein uL13 family. Part of the 50S ribosomal subunit.

Functionally, this protein is one of the early assembly proteins of the 50S ribosomal subunit, although it is not seen to bind rRNA by itself. It is important during the early stages of 50S assembly. The sequence is that of Large ribosomal subunit protein uL13 from Staphylococcus aureus (strain Mu3 / ATCC 700698).